Here is a 77-residue protein sequence, read N- to C-terminus: U8-lycotoxin-Ls1b (77 aa).

A signal peptide spans 1–20 (MKLIIFTGLVLFAIVSLIEA). Residues 21–26 (QAENEK) constitute a propeptide that is removed on maturation.

This sequence belongs to the neurotoxin 19 (CSTX) family. 08 (U8-Lctx) subfamily. Post-translationally, contains 4 disulfide bonds. In terms of tissue distribution, expressed by the venom gland.

The protein resides in the secreted. The sequence is that of U8-lycotoxin-Ls1b from Lycosa singoriensis (Wolf spider).